The chain runs to 908 residues: Alanine--tRNA ligase (908 aa).

Residues His-588, His-592, Cys-691, and His-695 each coordinate Zn(2+).

Belongs to the class-II aminoacyl-tRNA synthetase family. Zn(2+) serves as cofactor.

The protein localises to the cytoplasm. The catalysed reaction is tRNA(Ala) + L-alanine + ATP = L-alanyl-tRNA(Ala) + AMP + diphosphate. Functionally, catalyzes the attachment of alanine to tRNA(Ala) in a two-step reaction: alanine is first activated by ATP to form Ala-AMP and then transferred to the acceptor end of tRNA(Ala). Also edits incorrectly charged Ser-tRNA(Ala) and Gly-tRNA(Ala) via its editing domain. The protein is Alanine--tRNA ligase of Mycobacterium leprae (strain TN).